The chain runs to 633 residues: GTPase-activating protein GYP3 (633 aa).

Positions 26–127 are disordered; the sequence is AFTVKSPSVP…HSDDLDLVPD (102 aa). Basic and acidic residues predominate over residues 37 to 47; the sequence is FHDKMHSDHSS. The span at 99-115 shows a compositional bias: acidic residues; the sequence is GEDDDDNNGDNGNEDLE. At serine 147 the chain carries Phosphoserine. The 234-residue stretch at 223-456 folds into the Rab-GAP TBC domain; it reads GIPAEWRGNA…RIWDCLFYEE (234 aa). Phosphoserine is present on serine 484.

It localises to the cytoplasm. It is found in the bud. The protein resides in the bud neck. Regulates exocytosis by functioning as a GAP for SEC4. Stimulates specifically the GTPase activity of YPT6. Also required for efficient polarization of the actin patches. This Saccharomyces cerevisiae (strain ATCC 204508 / S288c) (Baker's yeast) protein is GTPase-activating protein GYP3 (MSB3).